We begin with the raw amino-acid sequence, 534 residues long: Lariat debranching enzyme A (534 aa).

Positions 8, 10, 39, and 84 each coordinate a divalent metal cation. The segment at 124 to 154 is lariat recognition loop; it reads SGIFKSHDYRKGHFERPPYSKDTVRSAYHVR. The a divalent metal cation site is built by H174, H226, and H228. Disordered regions lie at residues 386–439 and 469–534; these read EEEK…QEDE and SMAV…DEDE. Positions 388-400 are enriched in acidic residues; it reads EKEDFDMTEDNEA. Positions 413–424 are enriched in polar residues; it reads STDTSILSTSVN. Residues 428 to 439 show a composition bias toward acidic residues; the sequence is ITLEDDDEQEDE. Residues 484 to 499 are compositionally biased toward basic and acidic residues; it reads ELDRSESSQTEGEGKQ.

The protein belongs to the lariat debranching enzyme family. Fe(2+) serves as cofactor. Requires Zn(2+) as cofactor. It depends on Mn(2+) as a cofactor.

It is found in the nucleus. Active in presence of diverse metals including Fe(2+), Zn(2+), Mn(2+). Also activated by Ca(2+). Binds two metal cations in two adjacent alpha and beta metal-binding pockets. Its function is as follows. Cleaves the 2'-5' phosphodiester linkage at the branch point of excised lariat intron RNA and converts them into linear molecules that can be subsequently degraded, thereby facilitating ribonucleotide turnover. Linked to its role in pre-mRNA processing mechanism, may also participate in retrovirus replication and have an antiviral cell-intrinsic defense function. This is Lariat debranching enzyme A (dbr1-a) from Xenopus laevis (African clawed frog).